Consider the following 711-residue polypeptide: Constitutive ornithine decarboxylase (711 aa).

Lys347 carries the N6-(pyridoxal phosphate)lysine modification.

This sequence belongs to the Orn/Lys/Arg decarboxylase class-I family. It depends on pyridoxal 5'-phosphate as a cofactor.

It carries out the reaction L-ornithine + H(+) = putrescine + CO2. It participates in amine and polyamine biosynthesis; putrescine biosynthesis via L-ornithine pathway; putrescine from L-ornithine: step 1/1. The chain is Constitutive ornithine decarboxylase (speC) from Escherichia coli (strain K12).